We begin with the raw amino-acid sequence, 623 residues long: Heterogeneous nuclear ribonucleoprotein L (623 aa).

Positions 1 to 16 are enriched in basic residues; the sequence is MSRRLLPRAEKRRRRL. Residues 1–97 are disordered; the sequence is MSRRLLPRAE…NYDDPHKTPA (97 aa). Over residues 17–27 the composition is skewed to basic and acidic residues; sequence EQRQQPDEQLR. A compositionally biased stretch (low complexity) spans 28–37; the sequence is RAGAMVKMAA. A compositionally biased stretch (gly residues) spans 38–54; the sequence is AGGGGGGGRYYGGGNEG. Glycyl lysine isopeptide (Lys-Gly) (interchain with G-Cter in SUMO2) cross-links involve residues lysine 59 and lysine 62. Residues 69–87 are compositionally biased toward gly residues; that stretch reads QHGGGGGGGSGAAGGGGGE. Serine 98 carries the phosphoserine modification. Residues 99–173 enclose the RRM 1 domain; sequence PVVHIRGLID…HPAFVNYSTS (75 aa). Lysine 133 is covalently cross-linked (Glycyl lysine isopeptide (Lys-Gly) (interchain with G-Cter in SUMO2)). The residue at position 182 (serine 182) is a Phosphoserine. One can recognise an RRM 2 domain in the interval 190–267; the sequence is SVLLFTILNP…CTLKIEYAKP (78 aa). Position 266 is an N6-acetyllysine (lysine 266). A compositionally biased stretch (polar residues) spans 281-298; sequence DYTNPNLSGQGDPGSNPN. Residues 281–413 are disordered; the sequence is DYTNPNLSGQ…PPPPDYGPHA (133 aa). A phosphoserine mark is found at serine 288 and serine 295. A Glycyl lysine isopeptide (Lys-Gly) (interchain with G-Cter in SUMO2) cross-link involves residue lysine 299. Arginine 388 and arginine 392 each carry asymmetric dimethylarginine. Residues 398–409 show a composition bias toward pro residues; that stretch reads GHPPPPPPPPDY. Serine 415 bears the Phosphoserine mark. RRM domains lie at 416 to 490 and 498 to 586; these read PVLM…VSKQ and SYGL…WDSK. Serine 578 is subject to Phosphoserine; by CaMK4. Residue lysine 602 forms a Glycyl lysine isopeptide (Lys-Gly) (interchain with G-Cter in SUMO2) linkage.

In terms of assembly, identified in a IGF2BP1-dependent mRNP granule complex containing untranslated mRNAs. Interacts with HNRNPLL. Interacts with APEX1; the interaction is DNA-dependent. Component of a complex with SETD2. Interacts with ELAVL1. Part of a transcription inhibitory ribonucleoprotein complex composed at least of the circular RNA circZNF827, ZNF827 and HNRNPK. Interacts with CHD8 in an RNA-dependent manner. Post-translationally, several isoelectric forms of the L protein are probably the results of post-translational modifications. Phosphorylation at Ser-578 by CaMK4 enhances interaction with a CaMK4-responsive RNA element (CaRRE1), and prevents inclusion of the stress axis-regulated exon (STREX) of the KCNMA1 potassium channel transcripts upon membrane depolarization.

It localises to the nucleus. The protein resides in the nucleoplasm. It is found in the cytoplasm. Its function is as follows. Splicing factor binding to exonic or intronic sites and acting as either an activator or repressor of exon inclusion. Exhibits a binding preference for CA-rich elements. Component of the heterogeneous nuclear ribonucleoprotein (hnRNP) complexes and associated with most nascent transcripts. Associates, together with APEX1, to the negative calcium responsive element (nCaRE) B2 of the APEX2 promoter. As part of a ribonucleoprotein complex composed at least of ZNF827, HNRNPK and the circular RNA circZNF827 that nucleates the complex on chromatin, may negatively regulate the transcription of genes involved in neuronal differentiation. Regulates alternative splicing of a core group of genes involved in neuronal differentiation, likely by mediating H3K36me3-coupled transcription elongation and co-transcriptional RNA processing via interaction with CHD8. This Rattus norvegicus (Rat) protein is Heterogeneous nuclear ribonucleoprotein L.